Reading from the N-terminus, the 68-residue chain is uncharacterized protein (68 aa).

This sequence to B.subtilis XtrA.

This is an uncharacterized protein from Bacillus subtilis (strain 168).